The primary structure comprises 378 residues: Probable serine/threonine-protein kinase PBL7 (378 aa).

The disordered stretch occupies residues 1–49; it reads MGWIPCSGKSSGRNKTRRNGDHKLDRKSSDCSVSTSEKSRAKSSLSESK. The N-myristoyl glycine moiety is linked to residue glycine 2. Basic and acidic residues predominate over residues 18–29; that stretch reads RNGDHKLDRKSS. Over residues 32–47 the composition is skewed to low complexity; the sequence is SVSTSEKSRAKSSLSE. Threonine 62 carries the post-translational modification Phosphothreonine. The 278-residue stretch at 73-350 folds into the Protein kinase domain; that stretch reads FRKECLIGEG…ADVVTALSYL (278 aa). ATP-binding positions include 79-87 and lysine 102; that span reads IGEGGFGRV. Tyrosine 147 bears the Phosphotyrosine mark. Aspartate 200 acts as the Proton acceptor in catalysis. Residues serine 204 and serine 234 each carry the phosphoserine modification. 2 positions are modified to phosphothreonine: threonine 235 and threonine 240. Position 248 is a phosphotyrosine (tyrosine 248).

This sequence belongs to the protein kinase superfamily. Ser/Thr protein kinase family. As to quaternary structure, interacts with BSU1 and BSL1. Post-translationally, phosphorylated at Ser-43, Ser-46 and Ser-234. In terms of tissue distribution, widely expressed.

The protein localises to the cell membrane. It carries out the reaction L-seryl-[protein] + ATP = O-phospho-L-seryl-[protein] + ADP + H(+). It catalyses the reaction L-threonyl-[protein] + ATP = O-phospho-L-threonyl-[protein] + ADP + H(+). Its function is as follows. Serine/threonine-protein kinase involved in the positive regulation of brassinosteroid (BR) signaling and plant growth. Phosphorylates both BSU1 and BSL1 in vitro. The protein is Probable serine/threonine-protein kinase PBL7 of Arabidopsis thaliana (Mouse-ear cress).